Here is a 204-residue protein sequence, read N- to C-terminus: Probable GTP-binding protein EngB (204 aa).

The EngB-type G domain maps to 23–195; that stretch reads TLPEIAFVGR…ASALMQLLAM (173 aa). GTP contacts are provided by residues 31-38, 58-62, 76-79, 143-146, and 174-176; these read GRSNVGKS, GRTRE, DLPG, TKID, and FSA. Mg(2+)-binding residues include serine 38 and threonine 60.

The protein belongs to the TRAFAC class TrmE-Era-EngA-EngB-Septin-like GTPase superfamily. EngB GTPase family. Mg(2+) serves as cofactor.

Necessary for normal cell division and for the maintenance of normal septation. In Gemmatimonas aurantiaca (strain DSM 14586 / JCM 11422 / NBRC 100505 / T-27), this protein is Probable GTP-binding protein EngB.